The chain runs to 355 residues: MDFLHRNGVLIIQHLQKDYRAYYTFLNFMSNVGDPRNIFFIYFPLCFQFNQTVGTKMIWVAVIGDWLNLIFKWILFGHRPYWWVQETQIYPNHSSPCLEQFPTTCETGPGSPSGHAMGASCVWYVMVTAALSHTVCGMDKFSITLHRLTWSFLWSVFWLIQISVCISRVFIATHFPHQVILGVIGGMLVAEAFEHTPGIQTASLGTYLKTNLFLFLFAVGFYLLLRVLNIDLLWSVPIAKKWCANPDWIHIDTTPFAGLVRNLGVLFGLGFAINSEMFLLSCRGGNNYTLSFRLLCALTSLTILQLYHFLQIPTHEEHLFYVLSFCKSASIPLTVVAFIPYSVHMLMKQSGKKSQ.

Over 1 to 24 the chain is Lumenal; the sequence is MDFLHRNGVLIIQHLQKDYRAYYT. A helical transmembrane segment spans residues 25–45; that stretch reads FLNFMSNVGDPRNIFFIYFPL. Over 46–56 the chain is Cytoplasmic; sequence CFQFNQTVGTK. The helical transmembrane segment at 57–77 threads the bilayer; the sequence is MIWVAVIGDWLNLIFKWILFG. The Lumenal segment spans residues 78-115; the sequence is HRPYWWVQETQIYPNHSSPCLEQFPTTCETGPGSPSGH. Residue Arg79 coordinates substrate. N-linked (GlcNAc...) asparagine glycosylation is present at Asn92. His115 functions as the Proton donor in the catalytic mechanism. A helical transmembrane segment spans residues 116–136; that stretch reads AMGASCVWYVMVTAALSHTVC. At 137–146 the chain is on the cytoplasmic side; the sequence is GMDKFSITLH. The chain crosses the membrane as a helical span at residues 147-167; that stretch reads RLTWSFLWSVFWLIQISVCIS. Residue Arg168 is a topological domain, lumenal. Residue Arg168 coordinates substrate. The helical transmembrane segment at 169–189 threads the bilayer; that stretch reads VFIATHFPHQVILGVIGGMLV. The active-site Nucleophile is the His174. Topologically, residues 190–211 are cytoplasmic; it reads AEAFEHTPGIQTASLGTYLKTN. The helical transmembrane segment at 212-232 threads the bilayer; sequence LFLFLFAVGFYLLLRVLNIDL. The Lumenal portion of the chain corresponds to 233 to 261; the sequence is LWSVPIAKKWCANPDWIHIDTTPFAGLVR. The helical transmembrane segment at 262–282 threads the bilayer; it reads NLGVLFGLGFAINSEMFLLSC. The Cytoplasmic portion of the chain corresponds to 283–293; it reads RGGNNYTLSFR. Residues 294 to 314 traverse the membrane as a helical segment; sequence LLCALTSLTILQLYHFLQIPT. Residues 315 to 318 are Lumenal-facing; it reads HEEH. A helical transmembrane segment spans residues 319–339; the sequence is LFYVLSFCKSASIPLTVVAFI. The Cytoplasmic portion of the chain corresponds to 340 to 355; it reads PYSVHMLMKQSGKKSQ. The short motif at 352–355 is the Prevents secretion from ER element; it reads KKSQ.

It belongs to the glucose-6-phosphatase family. Post-translationally, N-glycosylated; the non-glycosylated form is more unstable and is degraded through the proteasome. In terms of tissue distribution, specifically expressed in pancreas and also detected to a lower extent in testis. Expressed by most islet cells in the pancreas (at protein level).

The protein localises to the endoplasmic reticulum membrane. It carries out the reaction D-glucose 6-phosphate + H2O = D-glucose + phosphate. It functions in the pathway carbohydrate biosynthesis; gluconeogenesis. Its function is as follows. May hydrolyze glucose-6-phosphate to glucose in the endoplasmic reticulum. May be responsible for glucose production through glycogenolysis and gluconeogenesis. This is Glucose-6-phosphatase 2 (G6PC2) from Homo sapiens (Human).